A 527-amino-acid polypeptide reads, in one-letter code: FHA domain-containing protein FhaA (527 aa).

Position 116 is a phosphothreonine (T116). The disordered stretch occupies residues 119–426; sequence FRARGTVNPD…APGGYSGYGQ (308 aa). The span at 170–188 shows a compositional bias: basic and acidic residues; the sequence is RPDEYYDDRYARPQEDPRG. 2 stretches are compositionally biased toward low complexity: residues 199–209 and 256–266; these read RGGYPPETGGY and YQDQGRGYPDQ. Residues 271–283 are compositionally biased toward pro residues; sequence YPPPYEQRPPVSP. Residues 284–299 are compositionally biased toward low complexity; sequence GPAAGYGAPGYDQGYR. The span at 300–322 shows a compositional bias: gly residues; that stretch reads QSGGYGPSPGGGQPGYGGYGEYG. Positions 345 to 366 are enriched in low complexity; sequence RPAYPDQGGYDQGYQQGATTYG. An FHA domain is found at 455–504; the sequence is NIIGRGQDAQFRLPDTGVSRRHLEIRWDGQVALLADLNSTNGTTVNNAPV.

As to quaternary structure, interacts with (phosphorylated) MviN and (phosphorylated) PknB via the FHA domain. Binds to the PknB juxtamembrane domain with an affinity that is modulated by the degree and the pattern of phosphorylation of this juxtamembrane domain. Post-translationally, phosphorylated by PknB.

The protein resides in the cytoplasm. Its function is as follows. Regulates cell growth and peptidoglycan synthesis by binding to MviN. May inhibit the late stages of peptidoglycan synthesis. This is FHA domain-containing protein FhaA (fhaA) from Mycobacterium tuberculosis (strain ATCC 25618 / H37Rv).